A 387-amino-acid polypeptide reads, in one-letter code: Ferrochelatase (387 aa).

Fe cation is bound by residues His196 and Glu277.

The protein belongs to the ferrochelatase family.

The protein localises to the cytoplasm. The enzyme catalyses heme b + 2 H(+) = protoporphyrin IX + Fe(2+). It participates in porphyrin-containing compound metabolism; protoheme biosynthesis; protoheme from protoporphyrin-IX: step 1/1. Catalyzes the ferrous insertion into protoporphyrin IX. This Rippkaea orientalis (strain PCC 8801 / RF-1) (Cyanothece sp. (strain PCC 8801)) protein is Ferrochelatase.